Here is an 88-residue protein sequence, read N- to C-terminus: MDIQLINIGFGNIVSANRVIAIVSPESAPIKRIISDARERGQLIDATYGRRTRAVIITDSSHVVLSAIQPETVAHRFVVNKEVQANSN.

The protein belongs to the RemA family.

This is Putative regulatory protein PCC7424_3427 from Gloeothece citriformis (strain PCC 7424) (Cyanothece sp. (strain PCC 7424)).